Consider the following 294-residue polypeptide: Octopine-binding periplasmic protein (294 aa).

The signal sequence occupies residues 1–20; the sequence is MRLKSIMCAALFVVAGQAAA. A disulfide bond links C57 and C64.

This sequence belongs to the bacterial solute-binding protein 3 family.

The protein resides in the periplasm. Its function is as follows. Component of the octopine active transport system probably consisting of four subunits: Q, M, P and T. The chain is Octopine-binding periplasmic protein (occT) from Rhizobium meliloti (Ensifer meliloti).